Reading from the N-terminus, the 532-residue chain is Phosphoribosylamine--glycine ligase, chloroplastic (532 aa).

The transit peptide at 1–75 (MSSLCASNCY…IQRRLFLLRC (75 aa)) directs the protein to the chloroplast. Positions 204-412 (KNLCHKYNIP…LAKVLLAACK (209 aa)) constitute an ATP-grasp domain.

It belongs to the GARS family.

Its subcellular location is the plastid. The protein resides in the chloroplast. It carries out the reaction 5-phospho-beta-D-ribosylamine + glycine + ATP = N(1)-(5-phospho-beta-D-ribosyl)glycinamide + ADP + phosphate + H(+). It functions in the pathway purine metabolism; IMP biosynthesis via de novo pathway; N(1)-(5-phospho-D-ribosyl)glycinamide from 5-phospho-alpha-D-ribose 1-diphosphate: step 2/2. This is Phosphoribosylamine--glycine ligase, chloroplastic (PUR2) from Arabidopsis thaliana (Mouse-ear cress).